A 630-amino-acid chain; its full sequence is Mitochondrial Rho GTPase 1 (630 aa).

A Miro 1 domain is found at 1–168 (MKEVRVVICG…FYMCRACVIY (168 aa)). Residues 1–598 (MKEVRVVICG…EEDSNKTNYQ (598 aa)) lie on the Cytoplasmic side of the membrane. GTP-binding positions include 10-17 (GDQGVGKS), 57-61 (DTQSD), and 113-116 (NKSE). 2 EF-hand domains span residues 184-219 (ATIHALSRIFFLIDKNNDDLLSVDELNSLSEKCFSK) and 304-339 (KGYRFLVDLFYQFDRDNDGALNNEELSALFRHTPGL). Residues D197, N199, D201, E208, D317, D319, D321, and E328 each contribute to the Ca(2+) site. One can recognise a Miro 2 domain in the interval 419 to 579 (RNVFLCFVVG…FIQLAESAQY (161 aa)). Residues 428–435 (GSKSCGKT), 459–463 (EFQST), and 527–530 (TKAD) each bind GTP. Residues 599–619 (LVAALTAFGALLLSVGGSLTW) traverse the membrane as a helical; Anchor for type IV membrane protein segment. Residues 620–630 (KIIKHQYYSKK) lie on the Mitochondrial intermembrane side of the membrane.

It belongs to the mitochondrial Rho GTPase family.

The protein resides in the mitochondrion outer membrane. In terms of biological role, mitochondrial GTPase involved in mitochondrial trafficking. Probably involved in control of anterograde transport of mitochondria and their subcellular distribution. This chain is Mitochondrial Rho GTPase 1 (gem1), found in Schizosaccharomyces pombe (strain 972 / ATCC 24843) (Fission yeast).